A 351-amino-acid chain; its full sequence is Synaptonemal complex central element protein 1 (351 aa).

Polar residues predominate over residues 1–10 (MAGRSLTSKA). Disordered stretches follow at residues 1-31 (MAGR…TSSQ) and 267-351 (KCQQ…KELF). The stretch at 52–290 (RVEVLINRIN…ELEKHGMQVP (239 aa)) forms a coiled coil.

This sequence belongs to the SYCE family. Homodimer. Found in a complex with SYCP1 and SYCE2. Interacts with SYCP1, SYCE2 and SYCE3. Interacts with SIX6OS1.

Its subcellular location is the nucleus. It is found in the chromosome. Functionally, major component of the transverse central element of synaptonemal complexes (SCS), formed between homologous chromosomes during meiotic prophase. Requires SYCP1 in order to be incorporated into the central element. May have a role in the synaptonemal complex assembly, stabilization and recombination. This chain is Synaptonemal complex central element protein 1 (SYCE1), found in Homo sapiens (Human).